Consider the following 489-residue polypeptide: Lysine--tRNA ligase (489 aa).

The Mg(2+) site is built by glutamate 399 and glutamate 406.

This sequence belongs to the class-II aminoacyl-tRNA synthetase family. Homodimer. It depends on Mg(2+) as a cofactor.

It localises to the cytoplasm. It catalyses the reaction tRNA(Lys) + L-lysine + ATP = L-lysyl-tRNA(Lys) + AMP + diphosphate. The protein is Lysine--tRNA ligase (lysS) of Mycoplasma pneumoniae (strain ATCC 29342 / M129 / Subtype 1) (Mycoplasmoides pneumoniae).